The primary structure comprises 191 residues: uncharacterized protein (191 aa).

This sequence to B.subtilis GlpP.

This is an uncharacterized protein from Escherichia coli (strain K12).